Reading from the N-terminus, the 349-residue chain is Cobalt-precorrin-5B C(1)-methyltransferase (349 aa).

This sequence belongs to the CbiD family.

The catalysed reaction is Co-precorrin-5B + S-adenosyl-L-methionine = Co-precorrin-6A + S-adenosyl-L-homocysteine. It participates in cofactor biosynthesis; adenosylcobalamin biosynthesis; cob(II)yrinate a,c-diamide from sirohydrochlorin (anaerobic route): step 6/10. Functionally, catalyzes the methylation of C-1 in cobalt-precorrin-5B to form cobalt-precorrin-6A. This chain is Cobalt-precorrin-5B C(1)-methyltransferase, found in Saccharolobus islandicus (strain L.S.2.15 / Lassen #1) (Sulfolobus islandicus).